The chain runs to 3329 residues: MPVEYKRRPTFWEIFKARCSTADLGPISLNWFEELSSEAPPYNSEPPEESEYKPHGYEPQLFKTPQRNPPYHQFASTPIMFKERSQTLPLDQSPFRELGKVVASSKHKTHSKKKTKVDPVVDVASPPLKSCLSESPLTLRCTQAVLQREKPVVSGSLFYTPKLKEGQTPKPISESLGVEVDPDMSWTSSLATPPTLSSTVLIARDEEARSSVTPADSPATLKSCFSNHNESPQKNDRSVPSVIDSENKNQQEAFSQGLGKMLGDSSGKRNSFKDCLRKPIPNILEDGETAVDTSEEDSFSLCFPKRRTRNLQKMRMGKTRKKIFSETRTDELSEEARRQTDDKNSFVFEMELRESDPLDPGVTSQKPFYSQNEEICNEAVQCSDSRWSQSNLSGLNETQTGKITLPHISSHSQNISEDFIDMKKEGTGSITSEKSLPHISSLPEPEKMFSEETVVDKEHEGQHFESLEDSIAGKQMVSRTSQAACLSPSIRKSIFKMREPLDETLGTVFSDSMTNSTFTEEHEASACGLGILTACSQREDSICPSSVDTGSWPTTLTDTSATVKNAGLISTLKNKKRKFIYSVSDDASLQGKKLQTHRQLELTNLSAQLEASAFEVPLTFTNVNSGIPDSSDKKRCLPNDPEEPSLTNSFGTATSKEISYIHALISQDLNDKEAIVIEEKPQPYTAREADFLLCLPERTCENDQKSPKVSNGKEKVLVSACLPSAVQLSSISFESQENPLGDHNGTSTLKLTPSSKLPLSKADMVSREKMCKMPEKLQCESCKVNIELSKNILEVNEICILSENSKTPGLLPPGENIIEVASSMKSQFNQNAKIVIQKDQKGSPFISEVAVNMNSEELFPDSGNNFAFQVTNKCNKPDLGSSVELQEEDLSHTQGPSLKNSPMAVDEDVDDAHAAQVLITKDSDSLAVVHDYTEKSRNNIEQHQKGTEDKDFKSNSSLNMKSDGNSDCSDKWSEFLDPVLNHNFGGSFRTASNKEIKLSEHNVKKSKMFFKDIEEQYPTRLACIDIVNTLPLANQKKLSEPHIFDLKSVTTVSTQSHNQSSVSHEDTDTAPQMLSSKQDFHSNNLTTSQKAEITELSTILEESGSQFEFTQFRKPSHIAQNTSEVPGNQMVVLSTASKEWKDTDLHLPVDPSVGQTDHSKQFEGSAGVKQSFPHLLEDTCNKNTSCFLPNINEMEFGGFCSALGTKLSVSNEALRKAMKLFSDIENSEEPSAKVGPRGFSSSAHHDSVASVFKIKKQNTEKSFDEKSSKCQVTLQNNIEMTTCIFVGRNPEKYIKNTKHEDSYTSSQRNNLENSDGSMSSTSGPVYIHKGDSDLPADQGSKCPESCTQYAREENTQIKENISDLTCLEIMKAEETCMKSSDKKQLPSDKMEQNIKEFNISFQTASGKNTRVSKESLNKSVNIFNRETDELTVISDSLNSKILHGINKDKMHTSCHKKAISIKKVFEDHFPIVTVSQLPAQQHPEYEIESTKEPTLLSFHTASGKKVKIMQESLDKVKNLFDETQYVRKTASFSQGSKPLKDSKKELTLAYEKIEVTASKCEEMQNFVSKETEMLPQQNYHMYRQTENLKTSNGTSSKVQENIENNVEKNPRICCICQSSYPVTEDSALAYYTEDSRKTCVRESSLSKGRKWLREQGDKLGTRNTIKIECVKEHTEDFAGNASYEHSLVIIRTEIDTNHVSENQVSTLLSDPNVCHSYLSQSSFCHCDDMHNDSGYFLKNKIDSDVPPDMKNAEGNTISPRVSATKERNLHPQTINEYCVQKLETNTSPHANKDVAIDPSLLDSRNCKVGSLVFITAHSQETERTKEIVTDNCYKIVEQNRQSKPDTCQTSCHKVLDDSKDFICPSSSGDVCINSRKDSFCPHNEQILQHNQSMSGLKKAATPPVGLETWDTSKSIREPPQAAHPSRTYGIFSTASGKAIQVSDASLEKARQVFSEMDGDAKQLSSMVSLEGNEKPHHSVKRENSVVHSTQGVLSLPKPLPGNVNSSVFSGFSTAGGKLVTVSESALHKVKGMLEEFDLIRTEHTLQHSPIPEDVSKILPQPCAEIRTPEYPVNSKLQKTYNDKSSLPSNYKESGSSGNTQSIEVSLQLSQMERNQDTQLVLGTKVSHSKANLLGKEQTLPQNIKVKTDEMKTFSDVPVKTNVGEYYSKESENYFETEAVESAKAFMEDDELTDSEQTHAKCSLFTCPQNETLFNSRTRKRGGVTVDAVGQPPIKRSLLNEFDRIIESKGKSLTPSKSTPDGTVKDRSLFTHHMSLEPVTCGPFCSSKERQGAQRPHLTSPAQELLSKGHPWRHSALEKSPSSPIVSILPAHDVSATRTERTRHSGKSTKVFVPPFKMKSQFHGDEHFNSKNVNLEGKNQKSTDGDREDGNDSHVRQFNKDLMSSLQSARDLQDMRIKNKERRHLRLQPGSLYLTKSSTLPRISLQAAVGDRAPSACSPKQLYIYGVSKECINVNSKNAEYFQFDIQDHFGKEDLCAGKGFQLADGGWLIPSNDGKAGKEEFYRALCDTPGVDPKLISSIWVANHYRWIVWKLAAMEFAFPKEFANRCLNPERVLLQLKYRYDVEIDNSRRSALKKILERDDTAAKTLVLCISDIISPSTKVSETSGGKTSGEDANKVDTIELTDGWYAVRAQLDPPLMALVKSGKLTVGQKIITQGAELVGSPDACAPLEAPDSLRLKISANSTRPARWHSRLGFFRDPRPFPLPLSSLFSDGGNVGCVDIIVQRVYPLQWVEKTVSGLYIFRSEREEEKEALRFAEAQQKKLEALFTKVHTEFKDHEEDTTQRCVLSRTLTRQQVHALQDGAELYAAVQYASDPDHLEACFSEEQLRALNNYRQMLNDKKQARIQSEFRKALESAEKEEGLSRDVTTVWKLRVTSYKKKEKSALLSIWRPSSDLSSLLTEGKRYRIYHLAVSKSKSKFERPSIQLTATKRTQYQQLPVSSETLLQVYQPRESLHFSRLSDPAFQPPCSEVDVVGVVVSVVKPIGLAPLVYLSDECLNLLVVKFGIDLNEDIKPRVLIAASNLQCQPESTSGVPTLFAGHFSIFSASPKEAYFQEKVNNLKHAIENIDTFYKEAEKKLIHVLEGDSPKWSTPNKDPTREPHAASTCCASDLLGSGGQFLRISPTGQQSYQSPLSHCTLKGKSMPLAHSAQMAAKSWSGENEIDDPKTCRKRRALDFLSRLPLPSPVSPICTFVSPAAQKAFQPPRSCGTKYATPIKKEPSSPRRRTPFQKTSGVSLPDCDSVADEELALLSTQALTPDSVGGNEQAFPGDSTRNPQPAQRPDQQVGPRSRKESLRDCRGDSSEKLAVES.

The tract at residues 1-40 (MPVEYKRRPTFWEIFKARCSTADLGPISLNWFEELSSEAP) is interaction with PALB2. Disordered stretches follow at residues 37-69 (SEAP…QRNP) and 207-241 (EARS…SVPS). A phosphoserine mark is found at Ser435 and Ser481. The interval 628 to 650 (PDSSDKKRCLPNDPEEPSLTNSF) is disordered. The interval 628 to 979 (PDSSDKKRCL…DKWSEFLDPV (352 aa)) is interaction with NPM1. Residue Ser735 is modified to Phosphoserine. Over residues 934–953 (EKSRNNIEQHQKGTEDKDFK) the composition is skewed to basic and acidic residues. A disordered region spans residues 934 to 965 (EKSRNNIEQHQKGTEDKDFKSNSSLNMKSDGN). The segment covering 954 to 965 (SNSSLNMKSDGN) has biased composition (polar residues). BRCA2 repeat units lie at residues 981-1015 (NHNF…DIEE) and 1192-1226 (NEME…DIEN). The interval 982–2035 (HNFGGSFRTA…LHKVKGMLEE (1054 aa)) is interaction with RAD51. The disordered stretch occupies residues 1296–1340 (NTKHEDSYTSSQRNNLENSDGSMSSTSGPVYIHKGDSDLPADQGS). Positions 1303 to 1323 (YTSSQRNNLENSDGSMSSTSG) are enriched in polar residues. 5 BRCA2 repeats span residues 1394–1428 (IKEF…RETD), 1491–1525 (KEPT…ETQY), 1623–1657 (TEDS…EQGD), 1924–1958 (PSRT…EMDG), and 2004–2038 (NSSV…EFDL). Residue Ser2048 is modified to Phosphoserine. Residues 2073–2099 (NSKLQKTYNDKSSLPSNYKESGSSGNT) are disordered. Residues 2074-2099 (SKLQKTYNDKSSLPSNYKESGSSGNT) show a composition bias toward polar residues. The interval 2219-2285 (KRGGVTVDAV…EPVTCGPFCS (67 aa)) is interaction with HSF2BP. An interaction with FANCD2 region spans residues 2298-2466 (TSPAQELLSK…SPKQLYIYGV (169 aa)). The segment at 2361–2393 (FHGDEHFNSKNVNLEGKNQKSTDGDREDGNDSH) is disordered. The span at 2377-2393 (KNQKSTDGDREDGNDSH) shows a compositional bias: basic and acidic residues. Positions 2402–2753 (MSSLQSARDL…QRVYPLQWVE (352 aa)) are interaction with SEM1. Positions 2603-2619 (AAKTLVLCISDIISPST) match the Nuclear export signal; masked by interaction with SEM1 motif. Position 3214 is a phosphoserine; by CDK1 and CDK2 (Ser3214). Disordered regions lie at residues 3221–3257 (FQPP…VSLP) and 3273–3329 (QALT…AVES). At Ser3241 the chain carries Phosphoserine. Basic and acidic residues predominate over residues 3309–3329 (SRKESLRDCRGDSSEKLAVES).

As to quaternary structure, monomer and dimer. Interacts with RAD51; regulates RAD51 recruitment and function at sites of DNA repair. Interacts with SEM1, WDR16, USP11, DMC1, ROCK2 and NPM1. Interacts with both nonubiquitinated and monoubiquitinated FANCD2; this complex also includes XRCC3 and phosphorylated FANCG. Part of a BRCA complex containing BRCA1, BRCA2 and PALB2. Component of the homologous recombination repair (HR) complex composed of ERCC5/XPG, BRCA2, PALB2, DSS1 and RAD51. Within the complex, interacts with ERCC5/XPG and PALB2. Interacts directly with PALB2 which may serve as a scaffold for a HR complex containing PALB2, BRCA2, RAD51C, RAD51 and XRCC3. Interacts with BRCA1 only in the presence of PALB2 which serves as the bridging protein. Interacts with POLH; the interaction is direct. Interacts with the TREX-2 complex subunits PCID2 and SEM1. Interacts with HSF2BP and BRME1; the interaction with HSF2BP is direct and allows the formation of a ternary complex. The complex BRME1:HSF2BP:BRCA2 interacts with SPATA22, MEIOB and RAD51. In terms of processing, phosphorylated by ATM upon irradiation-induced DNA damage. Phosphorylation by CHEK1 and CHEK2 regulates interaction with RAD51. Phosphorylation at Ser-3291 by CDK1 and CDK2 is low in S phase when recombination is active, but increases as cells progress towards mitosis; this phosphorylation prevents homologous recombination-dependent repair during S phase and G2 by inhibiting RAD51 binding. Post-translationally, ubiquitinated in the absence of DNA damage; this does not lead to proteasomal degradation. In contrast, ubiquitination in response to DNA damage leads to proteasomal degradation. As to expression, widely expressed. Highest expression in cerebellum, testis, ileum, appendix, epididymis, ovary and mammary gland. No expression in lung.

The protein resides in the nucleus. The protein localises to the cytoplasm. Its subcellular location is the cytoskeleton. It is found in the microtubule organizing center. It localises to the centrosome. Its function is as follows. Involved in double-strand break repair and/or homologous recombination. Binds RAD51 and potentiates recombinational DNA repair by promoting assembly of RAD51 onto single-stranded DNA (ssDNA). Acts by targeting RAD51 to ssDNA over double-stranded DNA, enabling RAD51 to displace replication protein-A (RPA) from ssDNA and stabilizing RAD51-ssDNA filaments by blocking ATP hydrolysis. Part of a PALB2-scaffolded HR complex containing RAD51C and which is thought to play a role in DNA repair by HR. May participate in S phase checkpoint activation. Binds selectively to ssDNA, and to ssDNA in tailed duplexes and replication fork structures. May play a role in the extension step after strand invasion at replication-dependent DNA double-strand breaks; together with PALB2 is involved in both POLH localization at collapsed replication forks and DNA polymerization activity. In concert with NPM1, regulates centrosome duplication. Interacts with the TREX-2 complex (transcription and export complex 2) subunits PCID2 and SEM1, and is required to prevent R-loop-associated DNA damage and thus transcription-associated genomic instability, independently of its known role in homologous recombination. The sequence is that of Breast cancer type 2 susceptibility protein homolog from Mus musculus (Mouse).